Consider the following 88-residue polypeptide: Small ribosomal subunit protein uS17 (88 aa).

It belongs to the universal ribosomal protein uS17 family. As to quaternary structure, part of the 30S ribosomal subunit.

One of the primary rRNA binding proteins, it binds specifically to the 5'-end of 16S ribosomal RNA. The protein is Small ribosomal subunit protein uS17 of Prochlorococcus marinus (strain MIT 9303).